The sequence spans 128 residues: Sulfurtransferase TusD (128 aa).

Cys78 (cysteine persulfide intermediate) is an active-site residue.

This sequence belongs to the DsrE/TusD family. In terms of assembly, heterohexamer, formed by a dimer of trimers. The hexameric TusBCD complex contains 2 copies each of TusB, TusC and TusD. The TusBCD complex interacts with TusE.

It is found in the cytoplasm. Its function is as follows. Part of a sulfur-relay system required for 2-thiolation of 5-methylaminomethyl-2-thiouridine (mnm(5)s(2)U) at tRNA wobble positions. Accepts sulfur from TusA and transfers it in turn to TusE. The protein is Sulfurtransferase TusD of Escherichia coli O7:K1 (strain IAI39 / ExPEC).